Consider the following 161-residue polypeptide: uncharacterized protein (161 aa).

The first 27 residues, 1–27 (MKKIGLLFMLCLAALFTIGFPAQQADA), serve as a signal peptide directing secretion.

It localises to the secreted. This is an uncharacterized protein from Bacillus subtilis (strain 168).